A 372-amino-acid polypeptide reads, in one-letter code: Probable leucine aminopeptidase MCYG_08380 (372 aa).

An N-terminal signal peptide occupies residues 1–19; sequence MKVSVLAAVAAFAAATAIA. N-linked (GlcNAc...) asparagine glycosylation occurs at Asn-96. His-175 and Asp-194 together coordinate Zn(2+). N-linked (GlcNAc...) asparagine glycosylation is found at Asn-195 and Asn-219. Glu-233 and Asp-260 together coordinate Zn(2+). A disulfide bridge links Cys-305 with Cys-309. Residue His-338 participates in Zn(2+) binding.

Belongs to the peptidase M28 family. M28E subfamily. As to quaternary structure, monomer. The cofactor is Zn(2+).

The protein localises to the secreted. Probable extracellular aminopeptidase which contributes to pathogenicity. This chain is Probable leucine aminopeptidase MCYG_08380, found in Arthroderma otae (strain ATCC MYA-4605 / CBS 113480) (Microsporum canis).